A 294-amino-acid chain; its full sequence is Nucleotide-binding protein DICTH_1001 (294 aa).

10 to 17 (GLSGAGKS) lines the ATP pocket. Residue 61–64 (DIRT) participates in GTP binding.

The protein belongs to the RapZ-like family.

In terms of biological role, displays ATPase and GTPase activities. This chain is Nucleotide-binding protein DICTH_1001, found in Dictyoglomus thermophilum (strain ATCC 35947 / DSM 3960 / H-6-12).